Reading from the N-terminus, the 429-residue chain is GTPase Obg (429 aa).

Residues 1-158 (MFYDTAKIYV…RWLLLELKLL (158 aa)) enclose the Obg domain. The region spanning 159–329 (ADVGLVGYPN…LIYRLWEIIS (171 aa)) is the OBG-type G domain. Residues 165–172 (GYPNAGKS), 190–194 (FTTLT), 212–215 (DIPG), 282–285 (NKMD), and 310–312 (SAL) each bind GTP. Mg(2+)-binding residues include Ser-172 and Thr-192. The OCT domain maps to 344–421 (IKEQPEEGFV…IGKFEFYFVD (78 aa)).

It belongs to the TRAFAC class OBG-HflX-like GTPase superfamily. OBG GTPase family. In terms of assembly, monomer. The cofactor is Mg(2+).

Its subcellular location is the cytoplasm. Functionally, an essential GTPase which binds GTP, GDP and possibly (p)ppGpp with moderate affinity, with high nucleotide exchange rates and a fairly low GTP hydrolysis rate. Plays a role in control of the cell cycle, stress response, ribosome biogenesis and in those bacteria that undergo differentiation, in morphogenesis control. The polypeptide is GTPase Obg (Carboxydothermus hydrogenoformans (strain ATCC BAA-161 / DSM 6008 / Z-2901)).